We begin with the raw amino-acid sequence, 873 residues long: Probable beta-glucosidase A (873 aa).

Residues 1 to 19 (MRFGWLEVAALTAASVANA) form the signal peptide. N-linked (GlcNAc...) asparagine glycosylation is found at asparagine 71, asparagine 222, and asparagine 263. Aspartate 291 is a catalytic residue. Asparagine 326, asparagine 333, asparagine 365, asparagine 453, asparagine 534, asparagine 553, asparagine 575, asparagine 679, and asparagine 725 each carry an N-linked (GlcNAc...) asparagine glycan. The tract at residues 731–764 (DSSDDPNYGWEDSEYIPEGARDGSPQPLLKAGGA) is disordered.

The protein belongs to the glycosyl hydrolase 3 family.

The protein localises to the secreted. It catalyses the reaction Hydrolysis of terminal, non-reducing beta-D-glucosyl residues with release of beta-D-glucose.. It participates in glycan metabolism; cellulose degradation. Beta-glucosidases are one of a number of cellulolytic enzymes involved in the degradation of cellulosic biomass. Catalyzes the last step releasing glucose from the inhibitory cellobiose. The sequence is that of Probable beta-glucosidase A (bglA) from Aspergillus fumigatus (strain CBS 144.89 / FGSC A1163 / CEA10) (Neosartorya fumigata).